We begin with the raw amino-acid sequence, 577 residues long: Sensor protein ChvG (577 aa).

The Cytoplasmic portion of the chain corresponds to 1-29; it reads MRGQRRWAHPFTLIRRLFGNAVFSSLTRR. A helical membrane pass occupies residues 30-50; the sequence is IVFFNLVALVVLVGGIMYLNQ. Over 51–260 the chain is Periplasmic; sequence FREGLIDARV…DIDKIVHAER (210 aa). A helical membrane pass occupies residues 261-281; the sequence is LAIIRVFGVAALVNVILSLLL. Residues 282–577 lie on the Cytoplasmic side of the membrane; sequence SSTIANPLRR…VLSLPAGPHP (296 aa). The 57-residue stretch at 283-339 folds into the HAMP domain; the sequence is STIANPLRRLSAAAIRVRRGGAKEREEIPDFSSRQDEIGNLSVALREMTTALYDRIA. The Histidine kinase domain occupies 347-575; the sequence is DVSHELKNPL…RFVLSLPAGP (229 aa). A Phosphohistidine modification is found at His350.

Homodimer.

The protein localises to the cell inner membrane. It carries out the reaction ATP + protein L-histidine = ADP + protein N-phospho-L-histidine.. The protein operates within glycan metabolism; exopolysaccharide biosynthesis. Its function is as follows. Member of a two-component regulatory system ChvG(ExoS)/ChvI involved in regulating the production of succinoglycan. Activates ChvI by phosphorylation. This is Sensor protein ChvG (chvG) from Rhizobium meliloti (strain 1021) (Ensifer meliloti).